The sequence spans 268 residues: Small ribosomal subunit protein eS1 (268 aa).

Residues 1–21 (MAVGKNKGLSKGGKKGGKKKV) are disordered.

The protein belongs to the eukaryotic ribosomal protein eS1 family. As to quaternary structure, component of the small ribosomal subunit. Mature ribosomes consist of a small (40S) and a large (60S) subunit. The 40S subunit contains about 33 different proteins and 1 molecule of RNA (18S). The 60S subunit contains about 49 different proteins and 3 molecules of RNA (28S, 5.8S and 5S).

The protein localises to the cytoplasm. Its function is as follows. Essential for oogenesis; required for late follicle cell development. This is Small ribosomal subunit protein eS1 from Drosophila erecta (Fruit fly).